The primary structure comprises 642 residues: Core protein VP4 (642 aa).

This sequence belongs to the orbivirus VP4 family.

Its subcellular location is the virion. The VP4 protein is one of the five proteins (with VP1, VP3, VP6 and VP7) which form the inner capsid of the virus. This chain is Core protein VP4 (Segment-4), found in African horse sickness virus (AHSV).